Reading from the N-terminus, the 68-residue chain is U1-hexatoxin-Hv1a (68 aa).

5 cysteine pairs are disulfide-bonded: Cys3/Cys14, Cys8/Cys22, Cys13/Cys48, Cys32/Cys56, and Cys50/Cys63.

Belongs to the MIT-like AcTx family. In terms of tissue distribution, expressed by the venom gland.

The protein resides in the secreted. The sequence is that of U1-hexatoxin-Hv1a from Hadronyche versuta (Blue mountains funnel-web spider).